Reading from the N-terminus, the 561-residue chain is AT-rich interactive domain-containing protein 3B (561 aa).

Residue Met-1 is modified to N-acetylmethionine. Residues 1-17 show a composition bias toward low complexity; sequence MEPLQQQQQQQQQQQKQ. 3 disordered regions span residues 1–36, 53–122, and 136–179; these read MEPLQQQQQQQQQQQKQPHLAPLQMDAREKQGQQMR, LSAT…SKYF, and PMSN…WNLD. A Phosphoserine modification is found at Ser-89. A compositionally biased stretch (acidic residues) spans 90–109; the sequence is EPEEEDGGLEDEDGDDEVAE. Over residues 152 to 162 the composition is skewed to basic and acidic residues; it reads QAKEDHTKDAS. Over residues 164-178 the composition is skewed to polar residues; the sequence is ASPSVSTAGQPNWNL. A Phosphoserine modification is found at Ser-165. The segment at 203–365 is interaction with RB1; the sequence is SRDFAKLYEL…SPPKIRFPIL (163 aa). Residues 215-307 enclose the ARID domain; the sequence is DPERKEFLDD…YLYAYECEKK (93 aa). At Ser-311 the chain carries Phosphoserine. Arg-361 bears the Asymmetric dimethylarginine mark. The interval 370 to 397 is disordered; that stretch reads SSGTNTSSPRISPATTLRKGDGAPVTTV. An REKLES domain is found at 419–517; sequence AALEQLRERL…GVLFAQKPVV (99 aa). Positions 490 to 513 are interaction with ARID3A; it reads SSIGSINMSVDIDGTTYAGVLFAQ. Low complexity predominate over residues 523 to 552; it reads SAPQSLGSSASSSSSSHCSPSPTSSRGTPS. Residues 523–561 form a disordered region; the sequence is SAPQSLGSSASSSSSSHCSPSPTSSRGTPSAEPSTSWSL.

Heterodimer with ARID3A. Interacts with unphosphorylated RB1. In terms of tissue distribution, expressed in placenta, testis and leukocytes. Expressed in neuroblastoma. Present in K-562 erythrocytic leukemia cell line (at protein level).

It localises to the nucleus. In terms of biological role, transcription factor which may be involved in neuroblastoma growth and malignant transformation. Favors nuclear targeting of ARID3A. The sequence is that of AT-rich interactive domain-containing protein 3B (ARID3B) from Homo sapiens (Human).